A 350-amino-acid chain; its full sequence is Vancomycin C-type resistance protein VanC2 (350 aa).

Catalysis depends on residues Glu-14 and Ser-187. One can recognise an ATP-grasp domain in the interval His-141 to Val-343. An ATP-binding site is contributed by Ile-171–Gly-226. Positions 297, 310, and 312 each coordinate Mg(2+). Residues Asp-297, Glu-310, and Asn-312 each coordinate Mn(2+). Ser-321 is an active-site residue.

Belongs to the D-alanine--D-alanine ligase family. In terms of assembly, homodimer. Requires Mg(2+) as cofactor. Mn(2+) serves as cofactor.

It is found in the cell membrane. It carries out the reaction D-serine + D-alanine + ATP = D-alanyl-D-serine + ADP + phosphate + H(+). Its pathway is cell wall biogenesis; peptidoglycan biosynthesis. Its activity is regulated as follows. Inhibited by D-cycloserine. Functionally, required for low-level resistance to the glycopeptide antibiotic vancomycin. D-alanine--D-alanine ligase of altered specificity, which catalyzes synthesis of D-Ala-D-Ser; produces a peptidoglycan which does not terminate in D-alanine but in D-serine, thus probably reducing affinity for vancomycin. Only insignificant catalytic synthesis of D-Ala-D-Ala in vitro. In Enterococcus casseliflavus (Enterococcus flavescens), this protein is Vancomycin C-type resistance protein VanC2.